The following is a 341-amino-acid chain: Ribosomal RNA small subunit methyltransferase H (341 aa).

S-adenosyl-L-methionine contacts are provided by residues 47 to 49 (GGY), D64, F91, D109, and Q116. The disordered stretch occupies residues 292-319 (VAASEEEASRNPRARSAKLRAGVRTEAP).

It belongs to the methyltransferase superfamily. RsmH family.

The protein localises to the cytoplasm. The enzyme catalyses cytidine(1402) in 16S rRNA + S-adenosyl-L-methionine = N(4)-methylcytidine(1402) in 16S rRNA + S-adenosyl-L-homocysteine + H(+). Its function is as follows. Specifically methylates the N4 position of cytidine in position 1402 (C1402) of 16S rRNA. This is Ribosomal RNA small subunit methyltransferase H from Rhizobium meliloti (strain 1021) (Ensifer meliloti).